The sequence spans 574 residues: Membrane protein insertase YidC (574 aa).

The helical transmembrane segment at 6-26 (VFLIFAWLMVAALLWMEWGKD) threads the bilayer. A disordered region spans residues 45 to 77 (RDPDAAAPSAANVPSAQPIPQAGAPGTVPATSS). 5 helical membrane passes run 356-376 (FSIM…LHSF), 380-400 (WGWA…PLSA), 447-467 (GGCL…WVLV), 489-509 (PYFI…KLTP), and 525-545 (PLVF…YWVV).

It belongs to the OXA1/ALB3/YidC family. Type 1 subfamily. Interacts with the Sec translocase complex via SecD. Specifically interacts with transmembrane segments of nascent integral membrane proteins during membrane integration.

The protein resides in the cell inner membrane. Its function is as follows. Required for the insertion and/or proper folding and/or complex formation of integral membrane proteins into the membrane. Involved in integration of membrane proteins that insert both dependently and independently of the Sec translocase complex, as well as at least some lipoproteins. Aids folding of multispanning membrane proteins. The sequence is that of Membrane protein insertase YidC from Xanthomonas euvesicatoria pv. vesicatoria (strain 85-10) (Xanthomonas campestris pv. vesicatoria).